The following is a 265-amino-acid chain: 3-methyl-2-oxobutanoate hydroxymethyltransferase (265 aa).

Mg(2+)-binding residues include D45 and D84. Residues D45 to S46, D84, and K112 each bind 3-methyl-2-oxobutanoate. E114 serves as a coordination point for Mg(2+). E182 (proton acceptor) is an active-site residue.

It belongs to the PanB family. In terms of assembly, homodecamer; pentamer of dimers. Mg(2+) is required as a cofactor.

The protein resides in the cytoplasm. The enzyme catalyses 3-methyl-2-oxobutanoate + (6R)-5,10-methylene-5,6,7,8-tetrahydrofolate + H2O = 2-dehydropantoate + (6S)-5,6,7,8-tetrahydrofolate. Its pathway is cofactor biosynthesis; (R)-pantothenate biosynthesis; (R)-pantoate from 3-methyl-2-oxobutanoate: step 1/2. Catalyzes the reversible reaction in which hydroxymethyl group from 5,10-methylenetetrahydrofolate is transferred onto alpha-ketoisovalerate to form ketopantoate. This chain is 3-methyl-2-oxobutanoate hydroxymethyltransferase, found in Baumannia cicadellinicola subsp. Homalodisca coagulata.